Reading from the N-terminus, the 477-residue chain is Ankyrin repeat, SAM and basic leucine zipper domain-containing protein 1 (477 aa).

A disordered region spans residues 1–24 (MAASSLWGPAVAGGGESSESEDDG). 3 positions are modified to phosphoserine: Ser17, Ser18, and Ser20. ANK repeat units lie at residues 45–74 (EKNE…SVDS), 78–107 (YGWT…NASF), 110–144 (DKQT…DPNV), 148–177 (RQMT…EVNA), 181–210 (NGYT…NKML), and 214–243 (DGKT…PLEG). In terms of domain architecture, SAM spans 272–334 (SYTAFGELDL…KILSALKELM (63 aa)).

In terms of assembly, interacts with DDX4, PIWIL1, RANBP9 and TDRD1.

The protein resides in the cytoplasm. Functionally, plays a central role during spermatogenesis by repressing transposable elements and preventing their mobilization, which is essential for the germline integrity. Acts via the piRNA metabolic process, which mediates the repression of transposable elements during meiosis by forming complexes composed of piRNAs and Piwi proteins and governs the methylation and subsequent repression of transposons. Its association with pi-bodies suggests a participation in the primary piRNAs metabolic process. Required prior to the pachytene stage to facilitate the production of multiple types of piRNAs, including those associated with repeats involved in the regulation of retrotransposons. May act by mediating protein-protein interactions during germ cell maturation. This chain is Ankyrin repeat, SAM and basic leucine zipper domain-containing protein 1 (ASZ1), found in Echinops telfairi (Lesser hedgehog tenrec).